The following is a 298-amino-acid chain: Diphthine methyl ester synthase (298 aa).

Residues Leu-9, Asp-85, Gly-88, 113–114 (SV), Leu-164, Leu-222, and His-247 each bind S-adenosyl-L-methionine.

The protein belongs to the diphthine synthase family.

The protein resides in the cytoplasm. The enzyme catalyses 2-[(3S)-amino-3-carboxypropyl]-L-histidyl-[translation elongation factor 2] + 4 S-adenosyl-L-methionine = diphthine methyl ester-[translation elongation factor 2] + 4 S-adenosyl-L-homocysteine + 3 H(+). It functions in the pathway protein modification; peptidyl-diphthamide biosynthesis. Functionally, S-adenosyl-L-methionine-dependent methyltransferase that catalyzes four methylations of the modified target histidine residue in translation elongation factor 2 (EF-2), to form an intermediate called diphthine methyl ester. The four successive methylation reactions represent the second step of diphthamide biosynthesis. This chain is Diphthine methyl ester synthase (DPH5), found in Eremothecium gossypii (strain ATCC 10895 / CBS 109.51 / FGSC 9923 / NRRL Y-1056) (Yeast).